The following is a 400-amino-acid chain: PHD finger protein 24 (400 aa).

G2 carries the N-myristoyl glycine lipid modification. The segment covering R29–G38 has biased composition (basic and acidic residues). The interval R29 to A65 is disordered. Omega-N-methylarginine is present on R36. Phosphoserine is present on S43. T47 is subject to Phosphothreonine. Residue S51 is modified to Phosphoserine. The PHD-type zinc finger occupies N129–N190. An Omega-N-methylarginine modification is found at R307.

The polypeptide is PHD finger protein 24 (Mus musculus (Mouse)).